The primary structure comprises 663 residues: Oxytetracycline resistance protein (663 aa).

Residues 1–252 enclose the tr-type G domain; the sequence is MNKLNLGILA…GIRELLPSVH (252 aa). GTP-binding positions include 10-17, 74-78, and 128-131; these read AHVDAGKT, DTPGH, and NKID.

Belongs to the TRAFAC class translation factor GTPase superfamily. Classic translation factor GTPase family. TetM/TetO subfamily.

In terms of biological role, abolishes the inhibitory effect of oxytetracycline on protein synthesis by a non-covalent modification of the ribosomes. The protein is Oxytetracycline resistance protein (otrA) of Streptomyces rimosus.